A 265-amino-acid chain; its full sequence is MEALPPVRSSLLGILLQVTRLSVLLVQNRDHLYNFLLLKINLFNHWVSGLAQEARGSCNWQAHLPLGAAACPLGQALWAGLALIQVPVWLVLQGPRLMWAGMWGSTKGLGLALLSAWEQLGLSVAIWTDLFLSCLHGLMLVALLLVVVTWRVCQKSHCFRLGRQLSKALQVNCVVRKLLVQLRRLYWWVETMTALTSWHLAYLITWTTCLASHLLQAAFEHTTQLAEAQEVEPQEVSGSSLLPSLSASSDSESGTVLPEQETPRE.

Transmembrane regions (helical) follow at residues 72–92 (PLGQALWAGLALIQVPVWLVL), 130–150 (LFLSCLHGLMLVALLLVVVTW), and 185–205 (LYWWVETMTALTSWHLAYLIT). The segment at 229–265 (QEVEPQEVSGSSLLPSLSASSDSESGTVLPEQETPRE) is disordered. A compositionally biased stretch (low complexity) spans 237–253 (SGSSLLPSLSASSDSES).

It localises to the membrane. This chain is Transmembrane protein 270, found in Homo sapiens (Human).